The sequence spans 356 residues: S-adenosylmethionine:tRNA ribosyltransferase-isomerase (356 aa).

Belongs to the QueA family. Monomer.

Its subcellular location is the cytoplasm. The enzyme catalyses 7-aminomethyl-7-carbaguanosine(34) in tRNA + S-adenosyl-L-methionine = epoxyqueuosine(34) in tRNA + adenine + L-methionine + 2 H(+). Its pathway is tRNA modification; tRNA-queuosine biosynthesis. Its function is as follows. Transfers and isomerizes the ribose moiety from AdoMet to the 7-aminomethyl group of 7-deazaguanine (preQ1-tRNA) to give epoxyqueuosine (oQ-tRNA). In Ralstonia nicotianae (strain ATCC BAA-1114 / GMI1000) (Ralstonia solanacearum), this protein is S-adenosylmethionine:tRNA ribosyltransferase-isomerase.